A 377-amino-acid polypeptide reads, in one-letter code: Leukocyte elastase inhibitor (377 aa).

M1 is modified (N-acetylmethionine).

It belongs to the serpin family. Ov-serpin subfamily.

Its subcellular location is the cytoplasm. Regulates the activity of the neutrophil proteases. This chain is Leukocyte elastase inhibitor (serpinb1), found in Xenopus laevis (African clawed frog).